The following is a 179-amino-acid chain: Large ribosomal subunit protein uL5 (179 aa).

This sequence belongs to the universal ribosomal protein uL5 family. Part of the 50S ribosomal subunit; part of the 5S rRNA/L5/L18/L25 subcomplex. Contacts the 5S rRNA and the P site tRNA. Forms a bridge to the 30S subunit in the 70S ribosome.

In terms of biological role, this is one of the proteins that bind and probably mediate the attachment of the 5S RNA into the large ribosomal subunit, where it forms part of the central protuberance. In the 70S ribosome it contacts protein S13 of the 30S subunit (bridge B1b), connecting the 2 subunits; this bridge is implicated in subunit movement. Contacts the P site tRNA; the 5S rRNA and some of its associated proteins might help stabilize positioning of ribosome-bound tRNAs. This Carboxydothermus hydrogenoformans (strain ATCC BAA-161 / DSM 6008 / Z-2901) protein is Large ribosomal subunit protein uL5.